The chain runs to 256 residues: Minor capsid protein P7 (256 aa).

2 hydrophobic regions span residues 24 to 44 (LLFASTWLYINNYILLSIIMK) and 47 to 67 (TKHMILLGFVAVVVVFIIFML). Cystine bridges form between cysteine 120-cysteine 134, cysteine 156-cysteine 172, and cysteine 188-cysteine 211.

In terms of assembly, interacts with the major capsid protein. Stabilized by 3 intramolecular disulfide bonds.

It is found in the virion. One of the minor capsid proteins that constitute a network internal to the major capsid proteins and outside the lipid membrane. The minor capsid proteins glue and stabilize the capsomers. This Paramecium bursaria Chlorella virus 1 (PBCV-1) protein is Minor capsid protein P7.